The sequence spans 363 residues: DNA primase small subunit PriS (363 aa).

Active-site residues include D105, D107, and D265.

Belongs to the eukaryotic-type primase small subunit family. In terms of assembly, heterodimer of a small subunit (PriS) and a large subunit (PriL). Requires Mg(2+) as cofactor. The cofactor is Mn(2+).

Catalytic subunit of DNA primase, an RNA polymerase that catalyzes the synthesis of short RNA molecules used as primers for DNA polymerase during DNA replication. The small subunit contains the primase catalytic core and has DNA synthesis activity on its own. Binding to the large subunit stabilizes and modulates the activity, increasing the rate of DNA synthesis while decreasing the length of the DNA fragments, and conferring RNA synthesis capability. The DNA polymerase activity may enable DNA primase to also catalyze primer extension after primer synthesis. May also play a role in DNA repair. The sequence is that of DNA primase small subunit PriS from Methanococcus maripaludis (strain C7 / ATCC BAA-1331).